We begin with the raw amino-acid sequence, 316 residues long: Beta-ketoacyl-[acyl-carrier-protein] synthase III (316 aa).

Residues Cys112 and His243 contribute to the active site. Positions 244–248 are ACP-binding; it reads QANLR. Residue Asn273 is part of the active site.

Belongs to the thiolase-like superfamily. FabH family. Homodimer.

The protein resides in the cytoplasm. It carries out the reaction malonyl-[ACP] + acetyl-CoA + H(+) = 3-oxobutanoyl-[ACP] + CO2 + CoA. Its pathway is lipid metabolism; fatty acid biosynthesis. Its function is as follows. Catalyzes the condensation reaction of fatty acid synthesis by the addition to an acyl acceptor of two carbons from malonyl-ACP. Catalyzes the first condensation reaction which initiates fatty acid synthesis and may therefore play a role in governing the total rate of fatty acid production. Possesses both acetoacetyl-ACP synthase and acetyl transacylase activities. Its substrate specificity determines the biosynthesis of branched-chain and/or straight-chain of fatty acids. The protein is Beta-ketoacyl-[acyl-carrier-protein] synthase III of Actinobacillus succinogenes (strain ATCC 55618 / DSM 22257 / CCUG 43843 / 130Z).